The chain runs to 255 residues: Ribose-5-phosphate isomerase (255 aa).

It belongs to the ribose 5-phosphate isomerase family.

The protein localises to the cytoplasm. It catalyses the reaction aldehydo-D-ribose 5-phosphate = D-ribulose 5-phosphate. It functions in the pathway carbohydrate degradation; pentose phosphate pathway; D-ribose 5-phosphate from D-ribulose 5-phosphate (non-oxidative stage): step 1/1. In Eremothecium gossypii (strain ATCC 10895 / CBS 109.51 / FGSC 9923 / NRRL Y-1056) (Yeast), this protein is Ribose-5-phosphate isomerase (RKI1).